Here is an 840-residue protein sequence, read N- to C-terminus: Phosphatidylglycerol lysyltransferase (840 aa).

The Cytoplasmic portion of the chain corresponds to methionine 1 to lysine 8. Residues isoleucine 9–leucine 29 form a helical membrane-spanning segment. Residues tyrosine 30–serine 52 are Extracellular-facing. A helical transmembrane segment spans residues leucine 53–isoleucine 73. The Cytoplasmic portion of the chain corresponds to leucine 74 to arginine 89. The chain crosses the membrane as a helical span at residues valine 90–glycine 110. Residues valine 111–histidine 128 lie on the Extracellular side of the membrane. The chain crosses the membrane as a helical span at residues phenylalanine 129–valine 149. Over phenylalanine 150 to lysine 161 the chain is Cytoplasmic. The helical transmembrane segment at isoleucine 162 to tyrosine 182 threads the bilayer. At serine 183 to threonine 200 the chain is on the extracellular side. Residues leucine 201–valine 221 form a helical membrane-spanning segment. Residues aspartate 222–serine 229 lie on the Cytoplasmic side of the membrane. The helical transmembrane segment at phenylalanine 230–phenylalanine 250 threads the bilayer. The Extracellular portion of the chain corresponds to glycine 251–valine 271. A helical membrane pass occupies residues leucine 272–isoleucine 292. Residues leucine 293 to serine 337 lie on the Cytoplasmic side of the membrane. The chain crosses the membrane as a helical span at residues leucine 338 to tyrosine 358. Over aspartate 359–tyrosine 369 the chain is Extracellular. The chain crosses the membrane as a helical span at residues tyrosine 370–isoleucine 390. At tyrosine 391–serine 394 the chain is on the cytoplasmic side. 2 helical membrane-spanning segments follow: residues arginine 395 to threonine 415 and tyrosine 416 to phenylalanine 436. The Cytoplasmic segment spans residues arginine 437–asparagine 450. Residues isoleucine 451 to glycine 471 form a helical membrane-spanning segment. Residues threonine 472–arginine 489 lie on the Extracellular side of the membrane. The chain crosses the membrane as a helical span at residues tyrosine 490–phenylalanine 510. Residues aspartate 511–lysine 840 lie on the Cytoplasmic side of the membrane.

It belongs to the LPG synthase family.

The protein resides in the cell membrane. It carries out the reaction L-lysyl-tRNA(Lys) + a 1,2-diacyl-sn-glycero-3-phospho-(1'-sn-glycerol) = a 1,2-diacyl-sn-glycero-3-phospho-1'-(3'-O-L-lysyl)-sn-glycerol + tRNA(Lys). Its function is as follows. Catalyzes the transfer of a lysyl group from L-lysyl-tRNA(Lys) to membrane-bound phosphatidylglycerol (PG), which produces lysylphosphatidylglycerol (LPG), a major component of the bacterial membrane with a positive net charge. LPG synthesis contributes to bacterial virulence as it is involved in the resistance mechanism against cationic antimicrobial peptides (CAMP) produces by the host's immune system (defensins, cathelicidins) and by the competing microorganisms (bacteriocins). In fact, the modification of anionic phosphatidylglycerol with positively charged L-lysine results in repulsion of the peptides. The chain is Phosphatidylglycerol lysyltransferase (mprF) from Staphylococcus aureus (strain MSSA476).